A 237-amino-acid chain; its full sequence is tRNA (guanine-N(7)-)-methyltransferase (237 aa).

S-adenosyl-L-methionine contacts are provided by Glu-68, Glu-93, Asp-120, and Asp-143. Residue Asp-143 is part of the active site. Residues Lys-147, Asp-179, and 216–219 (TKFE) contribute to the substrate site.

The protein belongs to the class I-like SAM-binding methyltransferase superfamily. TrmB family.

The enzyme catalyses guanosine(46) in tRNA + S-adenosyl-L-methionine = N(7)-methylguanosine(46) in tRNA + S-adenosyl-L-homocysteine. It functions in the pathway tRNA modification; N(7)-methylguanine-tRNA biosynthesis. Functionally, catalyzes the formation of N(7)-methylguanine at position 46 (m7G46) in tRNA. In Shewanella piezotolerans (strain WP3 / JCM 13877), this protein is tRNA (guanine-N(7)-)-methyltransferase.